The chain runs to 425 residues: Cyanogenic beta-glucosidase (425 aa).

Positions 1–11 (LLSITTTHIHA) are cleaved as a signal peptide. A beta-D-glucoside contacts are provided by residues glutamine 44, histidine 148, and 193–194 (NE). Glutamate 194 (proton donor) is an active-site residue. A disulfide bridge links cysteine 213 with cysteine 221. Asparagine 220 carries an N-linked (GlcNAc...) asparagine glycan. Residues tyrosine 337 and glutamate 408 each coordinate a beta-D-glucoside. Glutamate 408 (nucleophile) is an active-site residue. N-linked (GlcNAc...) asparagine glycosylation occurs at asparagine 412.

It belongs to the glycosyl hydrolase 1 family. In terms of assembly, homodimer. In terms of tissue distribution, leaves.

It catalyses the reaction Hydrolysis of terminal, non-reducing beta-D-glucosyl residues with release of beta-D-glucose.. Its function is as follows. Hydrolyzes cyanoglucosides, contributing to the release of hydrocyanic acid, which functions as a defense mechanism against small predators, when the leaf tissue is damaged. The chain is Cyanogenic beta-glucosidase (LI) from Trifolium repens (Creeping white clover).